The primary structure comprises 443 residues: Mitochondrial distribution and morphology protein 10 (443 aa).

It belongs to the MDM10 family. Component of the ER-mitochondria encounter structure (ERMES) or MDM complex, composed of MMM1, MDM10, MDM12 and MDM34. Associates with the mitochondrial outer membrane sorting assembly machinery SAM(core) complex.

It localises to the mitochondrion outer membrane. Functionally, component of the ERMES/MDM complex, which serves as a molecular tether to connect the endoplasmic reticulum and mitochondria. Components of this complex are involved in the control of mitochondrial shape and protein biogenesis and may function in phospholipid exchange. MDM10 is involved in the late assembly steps of the general translocase of the mitochondrial outer membrane (TOM complex). Functions in the TOM40-specific route of the assembly of outer membrane beta-barrel proteins, including the association of TOM40 with the receptor TOM22 and small TOM proteins. Can associate with the SAM(core) complex as well as the MDM12-MMM1 complex, both involved in late steps of the major beta-barrel assembly pathway, that is responsible for biogenesis of all outer membrane beta-barrel proteins. May act as a switch that shuttles between both complexes and channels precursor proteins into the TOM40-specific pathway. Plays a role in mitochondrial morphology and in the inheritance of mitochondria. The chain is Mitochondrial distribution and morphology protein 10 from Pyricularia oryzae (strain 70-15 / ATCC MYA-4617 / FGSC 8958) (Rice blast fungus).